The sequence spans 1312 residues: Tetratricopeptide repeat protein 21B (1312 aa).

6 TPR repeats span residues Thr4 to Asp38, Pro110 to Ser143, Leu147 to Ile180, Ala182 to Phe213, Leu214 to Asn247, and Ala325 to His358. Residues Val365–Ile392 are a coiled coil. TPR repeat units lie at residues Thr493–Cys526, Asp528–Val560, Pro564–Lys597, Val615–Thr648, Pro720–Asp753, Ser755–Asp787, Leu789–Ser820, Ala829–Ile861, Ser881–Ser914, Val916–Lys947, Glu948–Asn981, Ala983–Thr1015, Pro1019–Gly1052, Glu1193–Cys1226, Lys1228–Ser1260, and Pro1262–Tyr1295.

The protein belongs to the TTC21 family. In terms of assembly, component of the IFT complex A (IFT-A).

Functionally, component of the IFT complex A (IFT-A), a complex required for retrograde ciliary transport and entry into cilia of G protein-coupled receptors (GPCRs). Negatively modulates the SHH signal transduction. This chain is Tetratricopeptide repeat protein 21B (ttc21b), found in Xenopus laevis (African clawed frog).